Reading from the N-terminus, the 214-residue chain is Adenylate kinase (214 aa).

An ATP-binding site is contributed by 10-15 (GAGKGT). An NMP region spans residues 30–59 (STGDMFRDHKARGTEIGKQVQAIMDAGGLV). Residues Thr31, Arg36, 57-59 (GLV), 85-88 (GYPR), and Gln92 contribute to the AMP site. Residues 126-163 (GRRSCPRCGAVYHVSQNPPHRAGFCDRDDAALVQREDD) form an LID region. Residue Arg127 coordinates ATP. Residues Cys130 and Cys133 each coordinate Zn(2+). Position 136–137 (136–137 (VY)) interacts with ATP. Residues Cys150 and Asp153 each coordinate Zn(2+). The AMP site is built by Arg160 and Arg171. Gly199 provides a ligand contact to ATP.

The protein belongs to the adenylate kinase family. In terms of assembly, monomer.

Its subcellular location is the cytoplasm. It carries out the reaction AMP + ATP = 2 ADP. The protein operates within purine metabolism; AMP biosynthesis via salvage pathway; AMP from ADP: step 1/1. Catalyzes the reversible transfer of the terminal phosphate group between ATP and AMP. Plays an important role in cellular energy homeostasis and in adenine nucleotide metabolism. The chain is Adenylate kinase from Anaeromyxobacter dehalogenans (strain 2CP-1 / ATCC BAA-258).